A 162-amino-acid chain; its full sequence is Nucleotide-binding protein A2cp1_0112 (162 aa).

This sequence belongs to the YajQ family.

Functionally, nucleotide-binding protein. This is Nucleotide-binding protein A2cp1_0112 from Anaeromyxobacter dehalogenans (strain 2CP-1 / ATCC BAA-258).